Here is a 266-residue protein sequence, read N- to C-terminus: Glucosamine-6-phosphate deaminase (266 aa).

The Proton acceptor; for enolization step role is filled by Asp-72. Asp-141 functions as the For ring-opening step in the catalytic mechanism. His-143 acts as the Proton acceptor; for ring-opening step in catalysis. The active-site For ring-opening step is the Glu-148.

The protein belongs to the glucosamine/galactosamine-6-phosphate isomerase family. NagB subfamily. Homohexamer.

It catalyses the reaction alpha-D-glucosamine 6-phosphate + H2O = beta-D-fructose 6-phosphate + NH4(+). The protein operates within amino-sugar metabolism; N-acetylneuraminate degradation; D-fructose 6-phosphate from N-acetylneuraminate: step 5/5. Allosterically activated by N-acetylglucosamine 6-phosphate (GlcNAc6P). Catalyzes the reversible isomerization-deamination of glucosamine 6-phosphate (GlcN6P) to form fructose 6-phosphate (Fru6P) and ammonium ion. The chain is Glucosamine-6-phosphate deaminase from Yersinia pestis bv. Antiqua (strain Antiqua).